Here is a 430-residue protein sequence, read N- to C-terminus: Synaptotagmin-11 (430 aa).

At 1 to 15 the chain is on the vesicular side; it reads MAEITNIRPSFDVSP. Residues 16–36 traverse the membrane as a helical segment; sequence VAAGLIGASVLVVCVSVTVFV. The Cytoplasmic portion of the chain corresponds to 37–430; the sequence is WTCCHQQAEK…IAKWHSLSEY (394 aa). Positions 79–90 are enriched in basic and acidic residues; sequence RRDKDGPRRESG. Disordered regions lie at residues 79–120 and 132–152; these read RRDK…CMDQ and RSPM…SSPE. S133 carries the post-translational modification Phosphoserine. Over residues 134 to 150 the composition is skewed to polar residues; that stretch reads PMTSLTPGESKATSPSS. C2 domains are found at residues 156–278 and 290–425; these read MLGS…QLTR and SRGE…AKWH. Ca(2+)-binding residues include D249, S252, and D255.

Belongs to the synaptotagmin family. As to quaternary structure, homodimer. Can also form heterodimers. Interacts with PRKN. Interacts (via C2 2 domain) with AGO2 and SND1; the interaction with SND1 is direct. Interacts with KIF1A; the interaction increases in presence of calcium. It depends on Ca(2+) as a cofactor. Ubiquitinated, at least by PRKN, and targeted to the proteasome complex for degradation. Ubiquitination is inhibited by ATP13A2. Expressed in cerebellun, cerebellar cortex, hippocampus, olfactory bulb and spinal cord (at protein level). Expressed by neurons, astrocytes and microglia (at protein level). Expressed in macrophages (at protein level).

The protein localises to the cytoplasmic vesicle membrane. It is found in the perikaryon. Its subcellular location is the golgi apparatus. It localises to the trans-Golgi network membrane. The protein resides in the recycling endosome membrane. The protein localises to the lysosome membrane. It is found in the cytoplasmic vesicle. Its subcellular location is the phagosome. It localises to the cell projection. The protein resides in the axon. The protein localises to the dendrite. It is found in the postsynaptic density. Its subcellular location is the clathrin-coated vesicle membrane. Functionally, synaptotagmin family member involved in vesicular and membrane trafficking which does not bind Ca(2+). Inhibits clathrin-mediated and bulk endocytosis, functions to ensure precision in vesicle retrieval. Plays an important role in dopamine transmission by regulating endocytosis and the vesicle-recycling process. Essential component of a neuronal vesicular trafficking pathway that differs from the synaptic vesicle trafficking pathway but is crucial for development and synaptic plasticity. In macrophages and microglia, inhibits the conventional cytokine secretion, of at least IL6 and TNF, and phagocytosis. In astrocytes, regulates lysosome exocytosis, mechanism required for the repair of injured astrocyte cell membrane. Required for the ATP13A2-mediated regulation of the autophagy-lysosome pathway. In Mus musculus (Mouse), this protein is Synaptotagmin-11.